Reading from the N-terminus, the 535-residue chain is CTP synthase (535 aa).

The 236-residue stretch at 300–535 (RIGIVGKYAP…LVSASYERSK (236 aa)) folds into the Glutamine amidotransferase type-1 domain. Catalysis depends on for GATase activity residues cysteine 385, histidine 509, and glutamate 511.

It belongs to the CTP synthase family.

It carries out the reaction UTP + L-glutamine + ATP + H2O = CTP + L-glutamate + ADP + phosphate + 2 H(+). It participates in pyrimidine metabolism; CTP biosynthesis via de novo pathway; CTP from UDP: step 2/2. Functionally, catalyzes the ATP-dependent amination of UTP to CTP with either L-glutamine or ammonia as the source of nitrogen. The sequence is that of CTP synthase from Encephalitozoon cuniculi (strain GB-M1) (Microsporidian parasite).